We begin with the raw amino-acid sequence, 428 residues long: Gamma-glutamyl phosphate reductase (428 aa).

This sequence belongs to the gamma-glutamyl phosphate reductase family.

The protein localises to the cytoplasm. The catalysed reaction is L-glutamate 5-semialdehyde + phosphate + NADP(+) = L-glutamyl 5-phosphate + NADPH + H(+). The protein operates within amino-acid biosynthesis; L-proline biosynthesis; L-glutamate 5-semialdehyde from L-glutamate: step 2/2. Functionally, catalyzes the NADPH-dependent reduction of L-glutamate 5-phosphate into L-glutamate 5-semialdehyde and phosphate. The product spontaneously undergoes cyclization to form 1-pyrroline-5-carboxylate. The polypeptide is Gamma-glutamyl phosphate reductase (Hyphomonas neptunium (strain ATCC 15444)).